The chain runs to 303 residues: Diaminopimelate epimerase (303 aa).

Substrate-binding residues include Asn15, Gln47, and Asn67. Cys76 serves as the catalytic Proton donor. Substrate-binding positions include 77-78 (GN), Asn163, Asn197, and 215-216 (ER). The active-site Proton acceptor is the Cys224. 225 to 226 (GS) provides a ligand contact to substrate. The interval 278-303 (FDPATGEWSRDTQGLQGSGNADRGAA) is disordered.

This sequence belongs to the diaminopimelate epimerase family. As to quaternary structure, homodimer.

The protein resides in the cytoplasm. It catalyses the reaction (2S,6S)-2,6-diaminopimelate = meso-2,6-diaminopimelate. It participates in amino-acid biosynthesis; L-lysine biosynthesis via DAP pathway; DL-2,6-diaminopimelate from LL-2,6-diaminopimelate: step 1/1. Catalyzes the stereoinversion of LL-2,6-diaminopimelate (L,L-DAP) to meso-diaminopimelate (meso-DAP), a precursor of L-lysine and an essential component of the bacterial peptidoglycan. This is Diaminopimelate epimerase from Brucella abortus (strain S19).